The following is a 158-amino-acid chain: Interleukin-17A (158 aa).

Residues 1–25 form the signal peptide; it reads MSPGRASSVSLMLLLLLSLAATVKA. N71 is a glycosylation site (N-linked (GlcNAc...) asparagine). 2 disulfide bridges follow: C97-C147 and C102-C149.

This sequence belongs to the IL-17 family. As to quaternary structure, homodimer. Forms complexes with IL17RA and IL17RC receptors with 2:1 binding stoichiometry: two receptor chains for one interleukin molecule. IL17A homodimer preferentially drives the formation of IL17RA-IL17RC heterodimeric receptor complex. IL17A homodimer adopts an asymmetrical ternary structure with one IL17RA molecule, allowing for high affinity interactions of one IL17A monomer with one IL17RA molecule (via D1 and D2 domains), while disfavoring binding of a second IL17RA molecule on the other IL17A monomer. Heterodimer with IL17F. IL17A-IL17F forms complexes with IL17RA-IL17RC, but with lower affinity when compared to IL17A homodimer. IL17RA and IL17RC chains cannot distinguish between IL17A and IL17F molecules, potentially enabling the formation of topologically distinct complexes. As to expression, expressed by Th17 cell lineage (at protein level). The expression pattern reflects the differentiation state, with IL17A-IL17F heterodimers produced at higher levels than IL17A-IL17A and IL17F-IL17F dimers in fully differentiated Th17 cells. Expressed in innate lymphoid cells (at protein level). Expressed in gamma-delta T cell subsets (at protein level). Expressed in iNKT cells (at protein level).

The protein resides in the secreted. In terms of biological role, effector cytokine of innate and adaptive immune system involved in antimicrobial host defense and maintenance of tissue integrity. Signals via IL17RA-IL17RC heterodimeric receptor complex, triggering homotypic interaction of IL17RA and IL17RC chains with TRAF3IP2 adapter. This leads to downstream TRAF6-mediated activation of NF-kappa-B and MAPkinase pathways ultimately resulting in transcriptional activation of cytokines, chemokines, antimicrobial peptides and matrix metalloproteinases, with potential strong immune inflammation. Plays an important role in connecting T cell-mediated adaptive immunity and acute inflammatory response to destroy extracellular bacteria and fungi. As a signature effector cytokine of T-helper 17 cells (Th17), primarily induces neutrophil activation and recruitment at infection and inflammatory sites. In airway epithelium, mediates neutrophil chemotaxis via induction of CXCL1 and CXCL5 chemokines. In secondary lymphoid organs, contributes to germinal center formation by regulating the chemotactic response of B cells to CXCL12 and CXCL13, enhancing retention of B cells within the germinal centers, B cell somatic hypermutation rate and selection toward plasma cells. Effector cytokine of a subset of gamma-delta T cells that functions as part of an inflammatory circuit downstream IL1B, TLR2 and IL23A-IL12B to promote neutrophil recruitment for efficient bacterial clearance. Effector cytokine of innate immune cells including invariant natural killer cell (iNKT) and group 3 innate lymphoid cells that mediate initial neutrophilic inflammation. Involved in the maintenance of the integrity of epithelial barriers during homeostasis and pathogen infection. Upon acute injury, has a direct role in epithelial barrier formation by regulating OCLN localization and tight junction biogenesis. As part of the mucosal immune response induced by commensal bacteria, enhances host's ability to resist pathogenic bacterial and fungal infections by promoting neutrophil recruitment and antimicrobial peptides release. In synergy with IL17F, mediates the production of antimicrobial beta-defensins DEFB1, DEFB103A, and DEFB104A by mucosal epithelial cells, limiting the entry of microbes through the epithelial barriers. Involved in antiviral host defense through various mechanisms. Enhances immunity against West Nile virus by promoting T cell cytotoxicity. May play a beneficial role in influenza A virus (H5N1) infection by enhancing B cell recruitment and immune response in the lung. Contributes to influenza A virus (H1N1) clearance by driving the differentiation of B-1a B cells, providing for production of virus-specific IgM antibodies at first line of host defense. This chain is Interleukin-17A (Il17a), found in Mus musculus (Mouse).